The primary structure comprises 493 residues: Cobyric acid synthase (493 aa).

The GATase cobBQ-type domain occupies 246–440 (PIDIAVIKMP…IHGVFDGVSF (195 aa)). Cys326 (nucleophile) is an active-site residue. Residue His432 is part of the active site.

This sequence belongs to the CobB/CobQ family. CobQ subfamily.

It participates in cofactor biosynthesis; adenosylcobalamin biosynthesis. Functionally, catalyzes amidations at positions B, D, E, and G on adenosylcobyrinic A,C-diamide. NH(2) groups are provided by glutamine, and one molecule of ATP is hydrogenolyzed for each amidation. The sequence is that of Cobyric acid synthase from Clostridium botulinum (strain Langeland / NCTC 10281 / Type F).